Reading from the N-terminus, the 763-residue chain is uncharacterized protein (763 aa).

Positions 380 to 607 constitute a TR mART core domain; that stretch reads DSVLNPFNTN…YNIKVITMRL (228 aa). The helical transmembrane segment at 684–700 threads the bilayer; it reads SYVSIYALLCPLLTNIY.

It localises to the membrane. This is an uncharacterized protein from Acanthamoeba polyphaga mimivirus (APMV).